The chain runs to 221 residues: HTH-type transcriptional regulator McbR (221 aa).

The region spanning 10 to 77 (VSLTLQVEND…PAQAFTVPEV (68 aa)) is the HTH gntR-type domain. The H-T-H motif DNA-binding region spans 37–56 (TKNLAEQLGMSITPVREALL).

Important for biofilm formation. Represses expression of McbA by binding to its promoter region, which prevents colanic acid overproduction and mucoidy. This is HTH-type transcriptional regulator McbR (mcbR) from Escherichia coli (strain K12).